The following is a 236-amino-acid chain: uncharacterized protein (236 aa).

In terms of domain architecture, HTH gntR-type spans M1–H69. Residues L29–E48 constitute a DNA-binding region (H-T-H motif).

This is an uncharacterized protein from Bacillus subtilis (strain 168).